Consider the following 205-residue polypeptide: ITG-like peptide (205 aa).

An N-terminal signal peptide occupies residues 1–15 (MRVYAAITLVLVANT). 2 propeptides span residues 16-188 (AYIG…TSGE) and 202-205 (MPFA).

Expressed throughout the nervous system (at protein level).

The protein resides in the secreted. This is ITG-like peptide from Camponotus floridanus (Florida carpenter ant).